A 169-amino-acid chain; its full sequence is uncharacterized protein (169 aa).

Residues 10–30 (YFVTILIIIIIILIVLLIVFL) traverse the membrane as a helical segment. The disordered stretch occupies residues 98 to 123 (QSKPINKNNQQTKNTPTPLDDRPDLS). The span at 100–115 (KPINKNNQQTKNTPTP) shows a compositional bias: low complexity.

The protein localises to the membrane. This is an uncharacterized protein from Acanthamoeba polyphaga (Amoeba).